Reading from the N-terminus, the 362-residue chain is tRNA 2-selenouridine synthase (362 aa).

Residues 12–135 (FLNDTPLLDV…LRRFLIDEME (124 aa)) enclose the Rhodanese domain. The active-site S-selanylcysteine intermediate is cysteine 95.

The protein belongs to the SelU family. In terms of assembly, monomer.

It catalyses the reaction 5-methylaminomethyl-2-thiouridine(34) in tRNA + selenophosphate + (2E)-geranyl diphosphate + H2O + H(+) = 5-methylaminomethyl-2-selenouridine(34) in tRNA + (2E)-thiogeraniol + phosphate + diphosphate. The catalysed reaction is 5-methylaminomethyl-2-thiouridine(34) in tRNA + (2E)-geranyl diphosphate = 5-methylaminomethyl-S-(2E)-geranyl-thiouridine(34) in tRNA + diphosphate. It carries out the reaction 5-methylaminomethyl-S-(2E)-geranyl-thiouridine(34) in tRNA + selenophosphate + H(+) = 5-methylaminomethyl-2-(Se-phospho)selenouridine(34) in tRNA + (2E)-thiogeraniol. The enzyme catalyses 5-methylaminomethyl-2-(Se-phospho)selenouridine(34) in tRNA + H2O = 5-methylaminomethyl-2-selenouridine(34) in tRNA + phosphate. In terms of biological role, involved in the post-transcriptional modification of the uridine at the wobble position (U34) of tRNA(Lys), tRNA(Glu) and tRNA(Gln). Catalyzes the conversion of 2-thiouridine (S2U-RNA) to 2-selenouridine (Se2U-RNA). Acts in a two-step process involving geranylation of 2-thiouridine (S2U) to S-geranyl-2-thiouridine (geS2U) and subsequent selenation of the latter derivative to 2-selenouridine (Se2U) in the tRNA chain. This is tRNA 2-selenouridine synthase from Alcanivorax borkumensis (strain ATCC 700651 / DSM 11573 / NCIMB 13689 / SK2).